The chain runs to 1681 residues: Probable clathrin heavy chain 1 (1681 aa).

WD40-like repeat regions lie at residues 22 to 65 (NITF…RPIS), 66 to 105 (ADSV…NVED), 106 to 147 (VVYW…QSLA), 148 to 193 (GTQI…QPIE), 194 to 255 (GHAA…ADTA), 256 to 299 (GDFP…ISTD), and 300 to 328 (TVFV…VSID). 7 CHCR repeats span residues 539–685 (SENG…QVVV), 688–830 (ASKY…SEDA), 835–974 (IINT…QLID), 981–1126 (LSET…VKEA), 1130–1271 (FIKA…FRLA), 1276–1422 (LHIV…LLLN), and 1425–1568 (LTVL…YDCF). A compositionally biased stretch (basic and acidic residues) spans 1616 to 1628 (ERSEHERKEEKAE). Residues 1616–1635 (ERSEHERKEEKAEQQQNNGM) are disordered.

It belongs to the clathrin heavy chain family. Clathrin triskelions, composed of 3 heavy chains and 3 light chains, are the basic subunits of the clathrin coat. May interact with beta arrestin arr-1.

It localises to the cytoplasmic vesicle membrane. The protein resides in the membrane. Its subcellular location is the coated pit. Functionally, clathrin is the major protein of the polyhedral coat of coated pits and vesicles. May play a role in yolk protein clatherin-mediated endocytosis by oocytes during oogenesis. This Caenorhabditis elegans protein is Probable clathrin heavy chain 1 (chc-1).